A 399-amino-acid chain; its full sequence is S-adenosylmethionine synthase (399 aa).

His-16 contacts ATP. Asp-18 lines the Mg(2+) pocket. Position 44 (Glu-44) interacts with K(+). L-methionine-binding residues include Glu-57 and Gln-100. The segment at 100 to 110 (QSPDIAQGVDT) is flexible loop. Residues 175–177 (DGK), 246–247 (KF), Asp-255, 261–262 (RK), Ala-278, and Lys-282 contribute to the ATP site. Asp-255 is an L-methionine binding site. Lys-286 contacts L-methionine. An Isoglutamyl lysine isopeptide (Lys-Gln) (interchain with Q-Cter in protein Pup) cross-link involves residue Lys-341.

Belongs to the AdoMet synthase family. Homotetramer; dimer of dimers. It depends on Mg(2+) as a cofactor. The cofactor is K(+).

The protein localises to the cytoplasm. It catalyses the reaction L-methionine + ATP + H2O = S-adenosyl-L-methionine + phosphate + diphosphate. The protein operates within amino-acid biosynthesis; S-adenosyl-L-methionine biosynthesis; S-adenosyl-L-methionine from L-methionine: step 1/1. Functionally, catalyzes the formation of S-adenosylmethionine (AdoMet) from methionine and ATP. The overall synthetic reaction is composed of two sequential steps, AdoMet formation and the subsequent tripolyphosphate hydrolysis which occurs prior to release of AdoMet from the enzyme. The polypeptide is S-adenosylmethionine synthase (Mycolicibacterium smegmatis (strain ATCC 700084 / mc(2)155) (Mycobacterium smegmatis)).